A 203-amino-acid chain; its full sequence is UPF0637 protein MCCL_0722 (203 aa).

The protein belongs to the UPF0637 family.

This Macrococcus caseolyticus (strain JCSC5402) (Macrococcoides caseolyticum) protein is UPF0637 protein MCCL_0722.